The following is a 72-amino-acid chain: Translation initiation factor IF-1 (72 aa).

Positions methionine 1–lysine 72 constitute an S1-like domain.

It belongs to the IF-1 family. As to quaternary structure, component of the 30S ribosomal translation pre-initiation complex which assembles on the 30S ribosome in the order IF-2 and IF-3, IF-1 and N-formylmethionyl-tRNA(fMet); mRNA recruitment can occur at any time during PIC assembly.

It localises to the cytoplasm. Functionally, one of the essential components for the initiation of protein synthesis. Stabilizes the binding of IF-2 and IF-3 on the 30S subunit to which N-formylmethionyl-tRNA(fMet) subsequently binds. Helps modulate mRNA selection, yielding the 30S pre-initiation complex (PIC). Upon addition of the 50S ribosomal subunit IF-1, IF-2 and IF-3 are released leaving the mature 70S translation initiation complex. This Lachnoclostridium phytofermentans (strain ATCC 700394 / DSM 18823 / ISDg) (Clostridium phytofermentans) protein is Translation initiation factor IF-1.